We begin with the raw amino-acid sequence, 279 residues long: tRNA (guanine-N(1)-)-methyltransferase (279 aa).

S-adenosyl-L-methionine is bound by residues glycine 132 and 152–157 (IGDYVL).

This sequence belongs to the RNA methyltransferase TrmD family. As to quaternary structure, homodimer.

It localises to the cytoplasm. It catalyses the reaction guanosine(37) in tRNA + S-adenosyl-L-methionine = N(1)-methylguanosine(37) in tRNA + S-adenosyl-L-homocysteine + H(+). Specifically methylates guanosine-37 in various tRNAs. The protein is tRNA (guanine-N(1)-)-methyltransferase of Saccharophagus degradans (strain 2-40 / ATCC 43961 / DSM 17024).